The primary structure comprises 353 residues: 3-deoxy-D-manno-octulosonic acid transferase (353 aa).

E31 functions as the Proton acceptor in the catalytic mechanism. CMP-binding positions include 211–212 (PR), 247–249 (FGI), and 273–276 (NLLE).

This sequence belongs to the glycosyltransferase group 1 family. Glycosyltransferase 30 subfamily. Can form homodimer, homotrimer and homotetramer.

It localises to the cell inner membrane. It catalyses the reaction lipid IVA (E. coli) + CMP-3-deoxy-beta-D-manno-octulosonate = alpha-Kdo-(2-&gt;6)-lipid IVA (E. coli) + CMP + H(+). Its pathway is bacterial outer membrane biogenesis; LPS core biosynthesis. Functionally, involved in lipopolysaccharide (LPS) biosynthesis. Catalyzes the transfer of a single 3-deoxy-D-manno-octulosonate (Kdo) residue from CMP-Kdo to lipid IV(A), the tetraacyldisaccharide-1,4'-bisphosphate precursor of lipid A. Is strictly monofunctional, i.e. is capable of adding only a single Kdo residue to the acceptor lipid. The protein is 3-deoxy-D-manno-octulosonic acid transferase (kdtA) of Aquifex aeolicus (strain VF5).